The primary structure comprises 95 residues: Parvalbumin beta 3 (95 aa).

An N-acetylalanine modification is found at Ala1. EF-hand domains are found at residues 39–66 (FFAIIDQDHSGFIEEDELKLFLQTFSAG) and 77–95 (DVDGDGMIGVDEFVALVKA). Ca(2+)-binding residues include Asp44, Asp46, Ser48, Phe50, Glu52, Glu55, Asp77, Asp79, Asp81, Met83, and Glu88.

Belongs to the parvalbumin family.

Its function is as follows. In muscle, parvalbumin is thought to be involved in relaxation after contraction. It binds two calcium ions. The protein is Parvalbumin beta 3 of Merluccius paradoxus (Deep-water Cape hake).